Here is a 780-residue protein sequence, read N- to C-terminus: Protein AMEIOTIC 1 (780 aa).

Disordered regions lie at residues 32-60 (KKKT…SPLS) and 237-327 (APKE…RWSA). The span at 50-60 (DSTIQPRSPLS) shows a compositional bias: polar residues. Basic and acidic residues-rich tracts occupy residues 263 to 291 (EVKR…EGKK) and 309 to 327 (RTVE…RWSA). A coiled-coil region spans residues 448 to 547 (VEELTEEVNG…LEEQVTYLSS (100 aa)).

The protein resides in the nucleus. It localises to the chromosome. In terms of biological role, plays a fundamental role in building the proper chromosome structure at the beginning of meiosis in male meiocytes. Required for the transition from leptotene to zygotene in meiocytes. Required for homologous chromosome pairing, and initiation and progression of meiotic recombination. Regulates meiocyte cytoskeleton organization. This chain is Protein AMEIOTIC 1, found in Zea mays (Maize).